We begin with the raw amino-acid sequence, 441 residues long: Proline--tRNA ligase (441 aa).

Belongs to the class-II aminoacyl-tRNA synthetase family. ProS type 2 subfamily. Homodimer.

The protein resides in the cytoplasm. The catalysed reaction is tRNA(Pro) + L-proline + ATP = L-prolyl-tRNA(Pro) + AMP + diphosphate. Functionally, catalyzes the attachment of proline to tRNA(Pro) in a two-step reaction: proline is first activated by ATP to form Pro-AMP and then transferred to the acceptor end of tRNA(Pro). The chain is Proline--tRNA ligase from Methylorubrum extorquens (strain PA1) (Methylobacterium extorquens).